Here is a 2167-residue protein sequence, read N- to C-terminus: Glutamate synthase 1 [NADH], chloroplastic (2167 aa).

Residues 1–31 (MSAAQGMAYKLRTDAAPTGAGRRARRSHSSV) are disordered. The transit peptide at 1–36 (MSAAQGMAYKLRTDAAPTGAGRRARRSHSSVAAPYR) directs the protein to the chloroplast. Cysteine 100 (nucleophile) is an active-site residue. The Glutamine amidotransferase type-2 domain maps to 100-504 (CGVGFVAELS…PGMMLLVDFE (405 aa)). The tract at residues 1022–1042 (KSNTGEGGEQPSRMEPLANGS) is disordered. FMN is bound at residue 1192–1249 (LAETHQTLVANGLRGRAILQTDGQLKTGKDVAVACLLGAEEFGFSTAPLITLGCIMMR). Residues cysteine 1245, cysteine 1251, and cysteine 1256 each coordinate [3Fe-4S] cluster. 1956–1970 (GGGDTGTDCIGTSIR) provides a ligand contact to NAD(+).

It belongs to the glutamate synthase family. As to quaternary structure, monomer. Requires [3Fe-4S] cluster as cofactor. The cofactor is FAD. FMN is required as a cofactor. Highly expressed in roots.

The protein resides in the plastid. Its subcellular location is the chloroplast. The enzyme catalyses 2 L-glutamate + NAD(+) = L-glutamine + 2-oxoglutarate + NADH + H(+). It participates in amino-acid biosynthesis; L-glutamate biosynthesis via GLT pathway; L-glutamate from 2-oxoglutarate and L-glutamine (NAD(+) route): step 1/1. The protein operates within energy metabolism; nitrogen metabolism. Its function is as follows. Involved in glutamate biosynthesis and plays a major role in the primary ammonium ions assimilation in seedling roots. May be involved in the reutilization of glutamine in developing organs. Plays a role in the development of tillers. This is Glutamate synthase 1 [NADH], chloroplastic from Oryza sativa subsp. japonica (Rice).